The chain runs to 493 residues: Flagellin (493 aa).

It belongs to the bacterial flagellin family.

The protein resides in the secreted. It is found in the bacterial flagellum. Its function is as follows. Flagellin is the subunit protein which polymerizes to form the filaments of bacterial flagella. The chain is Flagellin (fliC) from Salmonella rubislaw.